The following is a 172-amino-acid chain: MSKVTFRADDDLVAAVEDLDASKSEVMRNALRAYLTTHAAADDVPVESVNTPVRGAATDAQKDVNVTIRVSSPSAVEEVRTTPASGGRADAEEPGDDGETDAEHADTSATGDESVCSQCGAELSADHVYCPNCGGKATHRVFCECGDEIRADWAFCPRCGRRTVSGDALDSA.

Positions 72 to 113 are disordered; it reads SPSAVEEVRTTPASGGRADAEEPGDDGETDAEHADTSATGDE. The segment at 116-160 adopts a DZANK-type zinc-finger fold; the sequence is CSQCGAELSADHVYCPNCGGKATHRVFCECGDEIRADWAFCPRCG.

The protein belongs to the CdrL family.

It localises to the cytoplasm. In terms of biological role, transcriptional regulator involved in the control of cell division. The sequence is that of Transcriptional regulator CdrL from Halobacterium salinarum (strain ATCC 29341 / DSM 671 / R1).